Here is a 347-residue protein sequence, read N- to C-terminus: Quinolinate synthase (347 aa).

Iminosuccinate is bound by residues histidine 47 and serine 68. A [4Fe-4S] cluster-binding site is contributed by cysteine 113. Residues 139–141 and serine 156 each bind iminosuccinate; that span reads YAN. Residue cysteine 200 coordinates [4Fe-4S] cluster. Iminosuccinate-binding positions include 226–228 and threonine 243; that span reads HPE. Cysteine 297 is a [4Fe-4S] cluster binding site.

The protein belongs to the quinolinate synthase family. Type 1 subfamily. [4Fe-4S] cluster serves as cofactor.

The protein localises to the cytoplasm. The catalysed reaction is iminosuccinate + dihydroxyacetone phosphate = quinolinate + phosphate + 2 H2O + H(+). It functions in the pathway cofactor biosynthesis; NAD(+) biosynthesis; quinolinate from iminoaspartate: step 1/1. Catalyzes the condensation of iminoaspartate with dihydroxyacetone phosphate to form quinolinate. The protein is Quinolinate synthase of Shigella flexneri.